Consider the following 341-residue polypeptide: L-threonine 3-dehydrogenase (341 aa).

Cysteine 38 is a binding site for Zn(2+). Residues threonine 40 and histidine 43 each act as charge relay system in the active site. Histidine 63, glutamate 64, cysteine 93, cysteine 96, cysteine 99, and cysteine 107 together coordinate Zn(2+). Residues isoleucine 175, aspartate 195, arginine 200, 262 to 264 (LGI), and 286 to 287 (IY) contribute to the NAD(+) site.

It belongs to the zinc-containing alcohol dehydrogenase family. As to quaternary structure, homotetramer. Zn(2+) serves as cofactor.

The protein resides in the cytoplasm. It carries out the reaction L-threonine + NAD(+) = (2S)-2-amino-3-oxobutanoate + NADH + H(+). It functions in the pathway amino-acid degradation; L-threonine degradation via oxydo-reductase pathway; glycine from L-threonine: step 1/2. Functionally, catalyzes the NAD(+)-dependent oxidation of L-threonine to 2-amino-3-ketobutyrate. The chain is L-threonine 3-dehydrogenase from Shigella sonnei (strain Ss046).